We begin with the raw amino-acid sequence, 477 residues long: 3-isopropylmalate dehydratase large subunit (477 aa).

Positions 358, 419, and 422 each coordinate [4Fe-4S] cluster.

Belongs to the aconitase/IPM isomerase family. LeuC type 1 subfamily. Heterodimer of LeuC and LeuD. The cofactor is [4Fe-4S] cluster.

It catalyses the reaction (2R,3S)-3-isopropylmalate = (2S)-2-isopropylmalate. It functions in the pathway amino-acid biosynthesis; L-leucine biosynthesis; L-leucine from 3-methyl-2-oxobutanoate: step 2/4. In terms of biological role, catalyzes the isomerization between 2-isopropylmalate and 3-isopropylmalate, via the formation of 2-isopropylmaleate. The sequence is that of 3-isopropylmalate dehydratase large subunit from Acinetobacter baylyi (strain ATCC 33305 / BD413 / ADP1).